Consider the following 65-residue polypeptide: Large ribosomal subunit protein bL35 (65 aa).

A compositionally biased stretch (basic residues) spans 1 to 16 (MPKQKTHRASAKRFKR). Residues 1 to 20 (MPKQKTHRASAKRFKRTGSG) form a disordered region.

The protein belongs to the bacterial ribosomal protein bL35 family.

The sequence is that of Large ribosomal subunit protein bL35 from Streptococcus equi subsp. equi (strain 4047).